A 432-amino-acid polypeptide reads, in one-letter code: Glutamate-1-semialdehyde 2,1-aminomutase (432 aa).

N6-(pyridoxal phosphate)lysine is present on Lys269.

It belongs to the class-III pyridoxal-phosphate-dependent aminotransferase family. HemL subfamily. In terms of assembly, homodimer. The cofactor is pyridoxal 5'-phosphate.

It is found in the cytoplasm. It catalyses the reaction (S)-4-amino-5-oxopentanoate = 5-aminolevulinate. It participates in porphyrin-containing compound metabolism; protoporphyrin-IX biosynthesis; 5-aminolevulinate from L-glutamyl-tRNA(Glu): step 2/2. The sequence is that of Glutamate-1-semialdehyde 2,1-aminomutase from Desulforamulus reducens (strain ATCC BAA-1160 / DSM 100696 / MI-1) (Desulfotomaculum reducens).